Reading from the N-terminus, the 481-residue chain is Serine--tRNA ligase (481 aa).

284–286 (TAE) is a binding site for L-serine. ATP is bound at residue 315-317 (RAE). Glutamate 338 is an L-serine binding site. 405–408 (EISS) contributes to the ATP binding site. Position 440 (serine 440) interacts with L-serine.

This sequence belongs to the class-II aminoacyl-tRNA synthetase family. Type-1 seryl-tRNA synthetase subfamily. Homodimer. The tRNA molecule binds across the dimer.

It localises to the cytoplasm. The enzyme catalyses tRNA(Ser) + L-serine + ATP = L-seryl-tRNA(Ser) + AMP + diphosphate + H(+). The catalysed reaction is tRNA(Sec) + L-serine + ATP = L-seryl-tRNA(Sec) + AMP + diphosphate + H(+). It functions in the pathway aminoacyl-tRNA biosynthesis; selenocysteinyl-tRNA(Sec) biosynthesis; L-seryl-tRNA(Sec) from L-serine and tRNA(Sec): step 1/1. In terms of biological role, catalyzes the attachment of serine to tRNA(Ser). Is also able to aminoacylate tRNA(Sec) with serine, to form the misacylated tRNA L-seryl-tRNA(Sec), which will be further converted into selenocysteinyl-tRNA(Sec). This is Serine--tRNA ligase from Rhodopseudomonas palustris (strain BisB18).